Consider the following 330-residue polypeptide: Mas-related G-protein coupled receptor member X2 (330 aa).

The Extracellular portion of the chain corresponds to 1 to 33; that stretch reads MDPTTPAWGTESTTMNGNDQALPLLCGKETLIL. Residues 34-54 form a helical membrane-spanning segment; that stretch reads VLLILFIALVGLVGNAFVLWL. Residues 55–63 lie on the Cytoplasmic side of the membrane; the sequence is LGFRMRRNA. The chain crosses the membrane as a helical span at residues 64–84; the sequence is FSVYVLSLAGADFLFLCFPMI. Residues 85–96 are Extracellular-facing; it reads NCLEYLINFFHS. Residues 97–117 traverse the membrane as a helical segment; the sequence is ISINFPSFFTTVMTCAYLAGL. The Cytoplasmic segment spans residues 118 to 144; the sequence is SMLSAISTERCLSVLWPIWYRCRRPRH. Residues 145–165 traverse the membrane as a helical segment; the sequence is LSAVLCVLLWALSLLLSILEG. At 166–184 the chain is on the extracellular side; it reads KFCGLLFSDGDSGWCQTFD. Residues 185 to 205 traverse the membrane as a helical segment; the sequence is FITAAWLMFLFVVLCGSSLAL. At 206-228 the chain is on the cytoplasmic side; sequence LVRILCGSQGLPLTRLYLTILLT. The chain crosses the membrane as a helical span at residues 229-249; that stretch reads VLIFLLCGLPFGIQWFLILWI. The Extracellular segment spans residues 250–264; sequence WKNSDVLFCHIHPVS. A helical transmembrane segment spans residues 265–285; that stretch reads VVLSSFNSSANPIIYFFVGSF. Residues 286 to 330 are Cytoplasmic-facing; sequence RKQWRLRQPVLKLALQRALQDTAEVDHSEGCFSQGTLEMSGSSLV.

The protein belongs to the G-protein coupled receptor 1 family. Mas subfamily.

It is found in the cell membrane. In terms of biological role, mast cell-specific receptor for basic secretagogues, i.e. cationic amphiphilic drugs, as well as endo- or exogenous peptides, consisting of a basic head group and a hydrophobic core. Recognizes and binds small molecules containing a cyclized tetrahydroisoquinoline (THIQ), such as non-steroidal neuromuscular blocking drugs (NMBDs), including tubocurarine and atracurium. In response to these compounds, mediates pseudo-allergic reactions characterized by histamine release, inflammation and airway contraction. The polypeptide is Mas-related G-protein coupled receptor member X2 (MRGPRX2) (Rhinopithecus bieti (Black snub-nosed monkey)).